The sequence spans 540 residues: Calnexin homolog (540 aa).

The first 29 residues, 1–29 (MELSRRKMCCYIQFCCFVLIGCFISQICA), serve as a signal peptide directing secretion. The Lumenal segment spans residues 30–469 (SSDAIFYESF…EKAETQPNIT (440 aa)). Ca(2+) contacts are provided by S38 and D69. C112 and C147 form a disulfide bridge. An alpha-D-glucoside is bound by residues Y116, K118, Y138, and D145. The interval 221-301 (LIPTKTIPDP…DWDDEEDGEW (81 aa)) is disordered. Positions 227–360 (IPDPDDKKPE…REIPNPDYFE (134 aa)) are p domain (Extended arm). Residues 228–253 (PDPDDKKPEDWDERAKIPDPEATKPD) are compositionally biased toward basic and acidic residues. Repeat copies occupy residues 229 to 240 (DPDDKKPEDWDE), 246 to 257 (DPEATKPDDWDE), 265 to 276 (DEEAEKPEGWLD), 284 to 295 (DPEAVKPEDWDD), and 299 to 309 (GEWEAPQIENP). 4 X approximate repeats stretches follow at residues 229-295 (DPDD…DWDD) and 299-356 (GEWE…IPNP). Composition is skewed to acidic residues over residues 254 to 285 (DWDE…IDDP) and 292 to 301 (DWDDEEDGEW). C311 and C317 are disulfide-bonded. 3 consecutive repeat copies span residues 318–328 (GEWRRPLKRNP), 332–342 (GKWHAPLIDNP), and 346–356 (GIWKPREIPNP). An an alpha-D-glucoside-binding site is contributed by E375. D386 provides a ligand contact to Ca(2+). An N-linked (GlcNAc...) asparagine glycan is attached at N467. The chain crosses the membrane as a helical span at residues 470-490 (IGVIVSIIVVIFSILLKLLFG). The Cytoplasmic portion of the chain corresponds to 491-540 (GKKAAPKVNVVPKKKEEPEASNTAEVREGEEEKTEGEVAAAPRRRPRRDT). The interval 499 to 540 (NVVPKKKEEPEASNTAEVREGEEEKTEGEVAAAPRRRPRRDT) is disordered.

Belongs to the calreticulin family.

The protein localises to the endoplasmic reticulum membrane. Calcium-binding protein that interacts with newly synthesized monoglucosylated glycoproteins in the endoplasmic reticulum. It may act in assisting protein assembly and/or in the retention within the ER of unassembled protein subunits. It seems to play a major role in the quality control apparatus of the ER by the retention of incorrectly folded proteins. The polypeptide is Calnexin homolog (Helianthus tuberosus (Jerusalem artichoke)).